The chain runs to 412 residues: Serine hydroxymethyltransferase (412 aa).

Residues leucine 117 and 121 to 123 (GHL) each bind (6S)-5,6,7,8-tetrahydrofolate. Lysine 226 carries the post-translational modification N6-(pyridoxal phosphate)lysine.

Belongs to the SHMT family. Homodimer. Pyridoxal 5'-phosphate is required as a cofactor.

It is found in the cytoplasm. The enzyme catalyses (6R)-5,10-methylene-5,6,7,8-tetrahydrofolate + glycine + H2O = (6S)-5,6,7,8-tetrahydrofolate + L-serine. It functions in the pathway one-carbon metabolism; tetrahydrofolate interconversion. The protein operates within amino-acid biosynthesis; glycine biosynthesis; glycine from L-serine: step 1/1. Catalyzes the reversible interconversion of serine and glycine with tetrahydrofolate (THF) serving as the one-carbon carrier. This reaction serves as the major source of one-carbon groups required for the biosynthesis of purines, thymidylate, methionine, and other important biomolecules. Also exhibits THF-independent aldolase activity toward beta-hydroxyamino acids, producing glycine and aldehydes, via a retro-aldol mechanism. In Staphylococcus aureus (strain MW2), this protein is Serine hydroxymethyltransferase.